A 911-amino-acid chain; its full sequence is Gem-associated protein 4a (911 aa).

As to quaternary structure, component of the core survival motor neuron (SMN) complex composed of Smn, Gem2, Gem3, rig/Gem5 and one of 3 almost identical Gem4 paralogs encoded by Glos/Gem4a, Gem4b or Gem4c. Interacts with Smn; the interaction is probably indirect.

Its function is as follows. Component of the survival motor neuron (SMN) complex that catalyzes the assembly of small nuclear ribonucleoproteins (snRNPs), the building blocks of the spliceosome, and thereby plays an important role in the splicing of cellular pre-mRNAs. One of 3 almost identical paralogs (Glos/Gem4a, Gem4b and Gem4c), resulting from a genomic triplication, that have some redundant function. Required for neuromuscular function and organismal viability. The chain is Gem-associated protein 4a from Drosophila melanogaster (Fruit fly).